Reading from the N-terminus, the 362-residue chain is Adenosine deaminase (362 aa).

Residues His-41 and His-43 each contribute to the Zn(2+) site. Position 43–45 (43–45 (HLD)) interacts with a purine D-ribonucleoside. The tract at residues 169-183 (IGETGISEESLRKAA) is gating helix loop; regulates binding affinity for substrates and thus substrate selectivity. Gly-200 serves as a coordination point for a purine D-ribonucleoside. Zn(2+) is bound at residue His-225. Residues Glu-228, His-252, and Asp-309 each contribute to the a purine D-ribonucleoside site. Residue Asp-309 coordinates Zn(2+).

The protein belongs to the metallo-dependent hydrolases superfamily. Adenosine and AMP deaminases family. Requires Zn(2+) as cofactor.

It catalyses the reaction adenosine + H2O + H(+) = inosine + NH4(+). It participates in purine metabolism; purine nucleoside salvage. Inhibited by coformycin but not by methylthiocoformycin (MT-coformycin). In terms of biological role, catalyzes the hydrolytic deamination of adenosine to produce inosine. Unlike other Plasmodium adenosine deaminases, does not catalyze the deamination of 5'-methylthioadenosine (MTA). Plays an essential role in the purine salvage pathway which allows the parasite to use host cell purines for the synthesis of nucleic acids. In Plasmodium gallinaceum, this protein is Adenosine deaminase.